The primary structure comprises 528 residues: Alpha-amylase (528 aa).

An N-terminal signal peptide occupies residues 1-28 (MNKKWLNIPALIALLAAIAFGSVAPAEA). Residues N168 and D228 each coordinate Ca(2+). The Nucleophile role is filled by D258. Residue H262 participates in Ca(2+) binding. The active-site Proton donor is E286.

Belongs to the glycosyl hydrolase 13 family. In terms of assembly, monomer. Ca(2+) is required as a cofactor.

It catalyses the reaction Endohydrolysis of (1-&gt;4)-alpha-D-glucosidic linkages in polysaccharides containing three or more (1-&gt;4)-alpha-linked D-glucose units.. The chain is Alpha-amylase from Niallia circulans (Bacillus circulans).